The chain runs to 225 residues: Protein-L-isoaspartate O-methyltransferase (225 aa).

Residues 57-60, His-65, Ser-89, 110-111, 142-143, Thr-216, and Gln-221 each bind S-adenosyl-L-homocysteine; these read ATVS, EH, and DG. Ser-60 is a catalytic residue.

It belongs to the methyltransferase superfamily. L-isoaspartyl/D-aspartyl protein methyltransferase family. Monomer.

Its subcellular location is the cytoplasm. The protein resides in the cytosol. The catalysed reaction is [protein]-L-isoaspartate + S-adenosyl-L-methionine = [protein]-L-isoaspartate alpha-methyl ester + S-adenosyl-L-homocysteine. In terms of biological role, initiates the repair of damaged proteins by catalyzing methyl esterification of L-isoaspartyl and D-aspartyl residues produced by spontaneous isomerization and racemization of L-aspartyl and L-asparaginyl residues in aging peptides and proteins. The protein is Protein-L-isoaspartate O-methyltransferase (pcm-1) of Caenorhabditis elegans.